The primary structure comprises 103 residues: Large ribosomal subunit protein uL24 (103 aa).

This sequence belongs to the universal ribosomal protein uL24 family. Part of the 50S ribosomal subunit.

Functionally, one of two assembly initiator proteins, it binds directly to the 5'-end of the 23S rRNA, where it nucleates assembly of the 50S subunit. Its function is as follows. One of the proteins that surrounds the polypeptide exit tunnel on the outside of the subunit. The polypeptide is Large ribosomal subunit protein uL24 (Brucella ovis (strain ATCC 25840 / 63/290 / NCTC 10512)).